We begin with the raw amino-acid sequence, 139 residues long: Large ribosomal subunit protein uL16 (139 aa).

The protein belongs to the universal ribosomal protein uL16 family. As to quaternary structure, part of the 50S ribosomal subunit.

In terms of biological role, binds 23S rRNA and is also seen to make contacts with the A and possibly P site tRNAs. This Microcystis aeruginosa (strain NIES-843 / IAM M-2473) protein is Large ribosomal subunit protein uL16.